The sequence spans 156 residues: Small ribosomal subunit protein uS7 (156 aa).

This sequence belongs to the universal ribosomal protein uS7 family. As to quaternary structure, part of the 30S ribosomal subunit. Contacts proteins S9 and S11.

In terms of biological role, one of the primary rRNA binding proteins, it binds directly to 16S rRNA where it nucleates assembly of the head domain of the 30S subunit. Is located at the subunit interface close to the decoding center, probably blocks exit of the E-site tRNA. The polypeptide is Small ribosomal subunit protein uS7 (Gemmatimonas aurantiaca (strain DSM 14586 / JCM 11422 / NBRC 100505 / T-27)).